The chain runs to 45 residues: MKKMSDQLKARLELRLSNAAQPHRNRKREMKRPGKGNRNNWKKEY.

Over residues 1 to 14 (MKKMSDQLKARLEL) the composition is skewed to basic and acidic residues. Residues 1–45 (MKKMSDQLKARLELRLSNAAQPHRNRKREMKRPGKGNRNNWKKEY) form a disordered region. The span at 23–35 (HRNRKREMKRPGK) shows a compositional bias: basic residues.

In Mycobacterium phage L5 (Mycobacteriophage L5), this protein is Gene 78 protein (78).